A 172-amino-acid polypeptide reads, in one-letter code: Ribosome maturation factor RimP (172 aa).

Belongs to the RimP family.

It localises to the cytoplasm. In terms of biological role, required for maturation of 30S ribosomal subunits. The protein is Ribosome maturation factor RimP of Nitratidesulfovibrio vulgaris (strain ATCC 29579 / DSM 644 / CCUG 34227 / NCIMB 8303 / VKM B-1760 / Hildenborough) (Desulfovibrio vulgaris).